A 560-amino-acid polypeptide reads, in one-letter code: Calnexin homolog (560 aa).

The first 22 residues, 1–22 (MKYGKVSFLALLCSLYVRGSLA), serve as a signal peptide directing secretion. The Lumenal portion of the chain corresponds to 23–489 (DPESEQEPLV…ETIIETPEIG (467 aa)). Cysteines 132 and 163 form a disulfide. An alpha-D-glucoside is bound by residues tyrosine 136, lysine 138, tyrosine 154, and aspartate 161. The interval 242–375 (IYDPEDIKPA…RKIPNPDYFD (134 aa)) is p domain (Extended arm). 5 repeat units span residues 244 to 255 (DPEDIKPADWVD), 261 to 272 (DPNAVKPDDWDE), 280 to 291 (DPDAVKPEDWLE), 299 to 310 (DPEAQKPEDWDD), and 314 to 324 (GDWIPSEIINP). 4 X approximate repeats regions lie at residues 244–310 (DPED…DWDD) and 314–371 (GDWI…IPNP). The tract at residues 253–273 (WVDEPEIPDPNAVKPDDWDED) is disordered. A disulfide bridge connects residues cysteine 326 and cysteine 332. Tandem repeats lie at residues 333 to 343 (GEWKPPMIRNP), 347 to 357 (GPWSPPMIPNP), and 361 to 371 (GEWYPRKIPNP). Glutamate 391 provides a ligand contact to an alpha-D-glucoside. An N-linked (GlcNAc...) asparagine glycan is attached at asparagine 418. The helical transmembrane segment at 490–512 (IAIVAVLGSLTAVILTCYFYFFA) threads the bilayer. The Cytoplasmic portion of the chain corresponds to 513–560 (SSSPASLSTGTTEAEKEQQEKFKQETETEKIDVSYAPETESPTAKNED). Residues 517-560 (ASLSTGTTEAEKEQQEKFKQETETEKIDVSYAPETESPTAKNED) are disordered. Over residues 525 to 544 (EAEKEQQEKFKQETETEKID) the composition is skewed to basic and acidic residues. Threonine 551 bears the Phosphothreonine mark. Serine 553 bears the Phosphoserine mark. Threonine 555 carries the post-translational modification Phosphothreonine.

Belongs to the calreticulin family.

It is found in the endoplasmic reticulum membrane. In terms of biological role, calcium-binding protein that interacts with newly synthesized monoglucosylated glycoproteins in the endoplasmic reticulum. It may act in assisting protein assembly and/or in the retention within the ER of unassembled protein subunits. It seems to play a major role in the quality control apparatus of the ER by the retention of incorrectly folded proteins. This Schizosaccharomyces pombe (strain 972 / ATCC 24843) (Fission yeast) protein is Calnexin homolog (cal1).